A 275-amino-acid chain; its full sequence is Ribosomal RNA small subunit methyltransferase A (275 aa).

The S-adenosyl-L-methionine site is built by Asn19, Leu21, Gly46, Glu71, Asp94, and Asn117.

Belongs to the class I-like SAM-binding methyltransferase superfamily. rRNA adenine N(6)-methyltransferase family. RsmA subfamily.

Its subcellular location is the cytoplasm. It catalyses the reaction adenosine(1518)/adenosine(1519) in 16S rRNA + 4 S-adenosyl-L-methionine = N(6)-dimethyladenosine(1518)/N(6)-dimethyladenosine(1519) in 16S rRNA + 4 S-adenosyl-L-homocysteine + 4 H(+). Specifically dimethylates two adjacent adenosines (A1518 and A1519) in the loop of a conserved hairpin near the 3'-end of 16S rRNA in the 30S particle. May play a critical role in biogenesis of 30S subunits. The sequence is that of Ribosomal RNA small subunit methyltransferase A from Burkholderia lata (strain ATCC 17760 / DSM 23089 / LMG 22485 / NCIMB 9086 / R18194 / 383).